The sequence spans 701 residues: DNA ligase (701 aa).

NAD(+) is bound by residues 58 to 62 (DYEYD), 107 to 108 (SL), and E138. K140 acts as the N6-AMP-lysine intermediate in catalysis. Residues R161, E199, K323, and K347 each contribute to the NAD(+) site. Zn(2+) is bound by residues C441, C444, C459, and C464. The region spanning 621 to 701 (EKRGKLAGLN…EEFLKMIGQQ (81 aa)) is the BRCT domain.

Belongs to the NAD-dependent DNA ligase family. LigA subfamily. Requires Mg(2+) as cofactor. Mn(2+) serves as cofactor.

It catalyses the reaction NAD(+) + (deoxyribonucleotide)n-3'-hydroxyl + 5'-phospho-(deoxyribonucleotide)m = (deoxyribonucleotide)n+m + AMP + beta-nicotinamide D-nucleotide.. Its function is as follows. DNA ligase that catalyzes the formation of phosphodiester linkages between 5'-phosphoryl and 3'-hydroxyl groups in double-stranded DNA using NAD as a coenzyme and as the energy source for the reaction. It is essential for DNA replication and repair of damaged DNA. The chain is DNA ligase from Sulfurihydrogenibium azorense (strain DSM 15241 / OCM 825 / Az-Fu1).